A 524-amino-acid polypeptide reads, in one-letter code: Alkaline phosphatase, tissue-nonspecific isozyme (524 aa).

The signal sequence occupies residues 1 to 17 (MISPFLVLAIGTCLTNS). Aspartate 60 is a binding site for Mg(2+). The Zn(2+) site is built by aspartate 60 and serine 110. Serine 110 acts as the Phosphoserine intermediate in catalysis. The residue at position 110 (serine 110) is a Phosphoserine. A disulfide bridge connects residues cysteine 139 and cysteine 201. A glycan (N-linked (GlcNAc...) asparagine) is linked at asparagine 140. Mg(2+) is bound at residue threonine 173. N-linked (GlcNAc...) asparagine glycosylation is present at asparagine 230. A Ca(2+)-binding site is contributed by glutamate 235. Residue asparagine 271 is glycosylated (N-linked (GlcNAc...) asparagine). Phenylalanine 290 and glutamate 291 together coordinate Ca(2+). N-linked (GlcNAc...) asparagine glycosylation is present at asparagine 303. Position 306 (aspartate 306) interacts with Ca(2+). Glutamate 332 contributes to the Mg(2+) binding site. The Zn(2+) site is built by aspartate 337, histidine 341, aspartate 378, and histidine 379. An N-linked (GlcNAc...) asparagine glycan is attached at asparagine 430. Position 454 (histidine 454) interacts with Zn(2+). Cysteine 489 and cysteine 497 are joined by a disulfide. Glycine 501 carries the GPI-anchor amidated glycine lipid modification. A propeptide spans 502–524 (SGSAPSPGALLLPLAVLSLRTLF) (removed in mature form).

Belongs to the alkaline phosphatase family. As to quaternary structure, homodimer. Requires Mg(2+) as cofactor. Zn(2+) serves as cofactor. It depends on Ca(2+) as a cofactor. N-glycosylated. Widely expressed. Expressed in DRG neurons and spinal cord neurons.

The protein resides in the cell membrane. It localises to the extracellular vesicle membrane. The protein localises to the mitochondrion membrane. Its subcellular location is the mitochondrion intermembrane space. It catalyses the reaction a phosphate monoester + H2O = an alcohol + phosphate. The enzyme catalyses diphosphate + H2O = 2 phosphate + H(+). It carries out the reaction pyridoxal 5'-phosphate + H2O = pyridoxal + phosphate. The catalysed reaction is phosphoethanolamine + H2O = ethanolamine + phosphate. It catalyses the reaction N-phosphocreatine + H2O = creatine + phosphate. The enzyme catalyses ATP + H2O = ADP + phosphate + H(+). It carries out the reaction ADP + H2O = AMP + phosphate + H(+). The catalysed reaction is AMP + H2O = adenosine + phosphate. With respect to regulation, phosphatase activity is specifically inhibited by 5-((5-chloro-2-methoxyphenyl)sulfonamido)nicotinamide (SBI-425). Alkaline phosphatase that metabolizes various phosphate compounds and plays a key role in skeletal mineralization and adaptive thermogenesis. Has broad substrate specificity and can hydrolyze a considerable variety of compounds: however, only a few substrates, such as diphosphate (inorganic pyrophosphate; PPi), pyridoxal 5'-phosphate (PLP) and N-phosphocreatine are natural substrates. Plays an essential role in skeletal and dental mineralization via its ability to hydrolyze extracellular diphosphate, a potent mineralization inhibitor, to phosphate: it thereby promotes hydroxyapatite crystal formation and increases inorganic phosphate concentration. Acts in a non-redundant manner with PHOSPHO1 in skeletal mineralization: while PHOSPHO1 mediates the initiation of hydroxyapatite crystallization in the matrix vesicles (MVs), ALPL/TNAP catalyzes the spread of hydroxyapatite crystallization in the extracellular matrix. Also promotes dephosphorylation of osteopontin (SSP1), an inhibitor of hydroxyapatite crystallization in its phosphorylated state; it is however unclear whether ALPL/TNAP mediates SSP1 dephosphorylation via a direct or indirect manner. Catalyzes dephosphorylation of PLP to pyridoxal (PL), the transportable form of vitamin B6, in order to provide a sufficient amount of PLP in the brain, an essential cofactor for enzymes catalyzing the synthesis of diverse neurotransmitters. Additionally, also able to mediate ATP degradation in a stepwise manner to adenosine, thereby regulating the availability of ligands for purinergic receptors. Also capable of dephosphorylating microbial products, such as lipopolysaccharides (LPS) as well as other phosphorylated small-molecules, such as poly-inosine:cytosine (poly I:C). Acts as a key regulator of adaptive thermogenesis as part of the futile creatine cycle: localizes to the mitochondria of thermogenic fat cells and acts by mediating hydrolysis of N-phosphocreatine to initiate a futile cycle of creatine dephosphorylation and phosphorylation. During the futile creatine cycle, creatine and N-phosphocreatine are in a futile cycle, which dissipates the high energy charge of N-phosphocreatine as heat without performing any mechanical or chemical work. This chain is Alkaline phosphatase, tissue-nonspecific isozyme, found in Mus musculus (Mouse).